Here is a 443-residue protein sequence, read N- to C-terminus: Toxin YjjJ (443 aa).

Aspartate 342 functions as the Proton acceptor in the catalytic mechanism.

The protein belongs to the HipA Ser/Thr kinase family.

In terms of biological role, toxic when overexpressed in E.coli, leading to long filamentous cells. The toxic effect is neutralized by non-cognate antitoxin HipB. Does not seem to inhibit DNA, RNA or protein synthesis, and unlike paralogous toxin HipA its toxic activity is not counteracted by overexpression of GltX. Binds DNA. Might be a protein kinase. In Escherichia coli (strain K12), this protein is Toxin YjjJ (yjjJ).